A 687-amino-acid polypeptide reads, in one-letter code: uncharacterized protein (687 aa).

14 consecutive transmembrane segments (helical) span residues 28-48 (IIFT…TIVV), 66-86 (WAVT…GKLG), 94-114 (VLLG…LSQT), 126-146 (GVGA…VVPL), 154-174 (GVLG…GGWL), 182-202 (WAFW…ATAV), 211-231 (PVID…LIMA), 243-263 (SATI…FVWL), 287-307 (VLSF…PIYL), 320-340 (LRTL…GVLV), 348-368 (IFPV…SQMD), 378-398 (LYLV…VLIV), 414-434 (VTFF…ALFV), and 480-500 (LTQV…LALL).

Belongs to the major facilitator superfamily. TCR/Tet family.

It localises to the cell membrane. This is an uncharacterized protein from Mycobacterium tuberculosis (strain CDC 1551 / Oshkosh).